The chain runs to 350 residues: Beta-hexosaminidase (350 aa).

Substrate is bound by residues aspartate 73, arginine 81, arginine 148, and 178–179; that span reads KH. Histidine 191 functions as the Proton donor/acceptor in the catalytic mechanism. Aspartate 262 serves as the catalytic Nucleophile.

It belongs to the glycosyl hydrolase 3 family. NagZ subfamily.

Its subcellular location is the cytoplasm. It catalyses the reaction Hydrolysis of terminal non-reducing N-acetyl-D-hexosamine residues in N-acetyl-beta-D-hexosaminides.. It participates in cell wall biogenesis; peptidoglycan recycling. Functionally, plays a role in peptidoglycan recycling by cleaving the terminal beta-1,4-linked N-acetylglucosamine (GlcNAc) from peptide-linked peptidoglycan fragments, giving rise to free GlcNAc, anhydro-N-acetylmuramic acid and anhydro-N-acetylmuramic acid-linked peptides. This Bordetella avium (strain 197N) protein is Beta-hexosaminidase.